Consider the following 450-residue polypeptide: Phosphoglucosamine mutase (450 aa).

The active-site Phosphoserine intermediate is the Ser101. Mg(2+) contacts are provided by Ser101, Asp240, Asp242, and Asp244. Ser101 bears the Phosphoserine mark.

This sequence belongs to the phosphohexose mutase family. Mg(2+) is required as a cofactor. Post-translationally, activated by phosphorylation.

It carries out the reaction alpha-D-glucosamine 1-phosphate = D-glucosamine 6-phosphate. Catalyzes the conversion of glucosamine-6-phosphate to glucosamine-1-phosphate. The chain is Phosphoglucosamine mutase from Streptococcus equi subsp. zooepidemicus (strain H70).